A 421-amino-acid chain; its full sequence is UPF0415 protein C7orf25 homolog (421 aa).

Belongs to the UPF0415 family.

The protein is UPF0415 protein C7orf25 homolog of Bos taurus (Bovine).